A 293-amino-acid polypeptide reads, in one-letter code: Homoserine kinase (293 aa).

An ATP-binding site is contributed by 80–90 (RPASGLGSSAA).

The protein belongs to the GHMP kinase family. Homoserine kinase subfamily.

The protein resides in the cytoplasm. It carries out the reaction L-homoserine + ATP = O-phospho-L-homoserine + ADP + H(+). It participates in amino-acid biosynthesis; L-threonine biosynthesis; L-threonine from L-aspartate: step 4/5. In terms of biological role, catalyzes the ATP-dependent phosphorylation of L-homoserine to L-homoserine phosphate. This Halorubrum lacusprofundi (strain ATCC 49239 / DSM 5036 / JCM 8891 / ACAM 34) protein is Homoserine kinase.